A 466-amino-acid chain; its full sequence is Putative transcription factor bHLH041 (466 aa).

Disordered regions lie at residues 108-129 (PANS…SLSP), 194-213 (LTGP…KGRA), and 260-289 (RENA…TQLQ). A compositionally biased stretch (low complexity) spans 120-129 (PSSSSSSLSP). The segment covering 268–279 (EGSGGSGGGGRY) has biased composition (gly residues). The 50-residue stretch at 285–334 (ATQLQHMISERKRREKLNESFQALRSLLPPGTKKDKASVLSIAREQLSSL) folds into the bHLH domain.

Homodimer.

It is found in the nucleus. The polypeptide is Putative transcription factor bHLH041 (BHLH41) (Arabidopsis thaliana (Mouse-ear cress)).